Here is a 142-residue protein sequence, read N- to C-terminus: Putative pre-16S rRNA nuclease (142 aa).

It belongs to the YqgF nuclease family.

It is found in the cytoplasm. In terms of biological role, could be a nuclease involved in processing of the 5'-end of pre-16S rRNA. The polypeptide is Putative pre-16S rRNA nuclease (Chloroflexus aggregans (strain MD-66 / DSM 9485)).